Here is a 414-residue protein sequence, read N- to C-terminus: tRNA(Ile)-lysidine synthase (414 aa).

13 to 18 lines the ATP pocket; that stretch reads SGGIDS.

This sequence belongs to the tRNA(Ile)-lysidine synthase family.

It is found in the cytoplasm. The enzyme catalyses cytidine(34) in tRNA(Ile2) + L-lysine + ATP = lysidine(34) in tRNA(Ile2) + AMP + diphosphate + H(+). In terms of biological role, ligates lysine onto the cytidine present at position 34 of the AUA codon-specific tRNA(Ile) that contains the anticodon CAU, in an ATP-dependent manner. Cytidine is converted to lysidine, thus changing the amino acid specificity of the tRNA from methionine to isoleucine. The sequence is that of tRNA(Ile)-lysidine synthase from Thermotoga maritima (strain ATCC 43589 / DSM 3109 / JCM 10099 / NBRC 100826 / MSB8).